The following is a 301-amino-acid chain: Protoheme IX farnesyltransferase 1 (301 aa).

Helical transmembrane passes span 29-49, 51-71, 101-121, 123-143, 150-170, 177-197, 223-243, 244-264, and 281-301; these read VVAL…PTAV, VQPL…AAAL, ALIF…VLVN, LTAW…TAYL, NIVI…TAVT, ALLL…ALAI, CILL…LVGM, CGPM…YKAW, and FSIY…YLWS.

It belongs to the UbiA prenyltransferase family. Protoheme IX farnesyltransferase subfamily.

The protein localises to the cell inner membrane. The enzyme catalyses heme b + (2E,6E)-farnesyl diphosphate + H2O = Fe(II)-heme o + diphosphate. It functions in the pathway porphyrin-containing compound metabolism; heme O biosynthesis; heme O from protoheme: step 1/1. In terms of biological role, converts heme B (protoheme IX) to heme O by substitution of the vinyl group on carbon 2 of heme B porphyrin ring with a hydroxyethyl farnesyl side group. The chain is Protoheme IX farnesyltransferase 1 from Shewanella putrefaciens (strain CN-32 / ATCC BAA-453).